The chain runs to 276 residues: NADPH-dependent 7-cyano-7-deazaguanine reductase (276 aa).

A substrate-binding site is contributed by 83–85; the sequence is IES. An NADPH-binding site is contributed by 85–86; the sequence is SK. Cysteine 184 (thioimide intermediate) is an active-site residue. Catalysis depends on aspartate 191, which acts as the Proton donor. 223–224 contacts substrate; the sequence is HE. Residue 252–253 coordinates NADPH; the sequence is RG.

The protein belongs to the GTP cyclohydrolase I family. QueF type 2 subfamily. In terms of assembly, homodimer.

The protein resides in the cytoplasm. The enzyme catalyses 7-aminomethyl-7-carbaguanine + 2 NADP(+) = 7-cyano-7-deazaguanine + 2 NADPH + 3 H(+). Its pathway is tRNA modification; tRNA-queuosine biosynthesis. Functionally, catalyzes the NADPH-dependent reduction of 7-cyano-7-deazaguanine (preQ0) to 7-aminomethyl-7-deazaguanine (preQ1). The polypeptide is NADPH-dependent 7-cyano-7-deazaguanine reductase (Pseudomonas syringae pv. syringae (strain B728a)).